The following is a 79-amino-acid chain: Putative defensin-like protein 274 (79 aa).

A signal peptide spans 1–23 (MASSRFQLVALLVVFSLVISITA). 4 disulfides stabilise this stretch: Cys-35–Cys-76, Cys-41–Cys-64, Cys-47–Cys-74, and Cys-51–Cys-75.

Belongs to the DEFL family.

It is found in the secreted. The protein is Putative defensin-like protein 274 of Arabidopsis thaliana (Mouse-ear cress).